Consider the following 104-residue polypeptide: Small ribosomal subunit protein uS10 (104 aa).

The protein belongs to the universal ribosomal protein uS10 family. As to quaternary structure, part of the 30S ribosomal subunit.

In terms of biological role, involved in the binding of tRNA to the ribosomes. The protein is Small ribosomal subunit protein uS10 of Aliarcobacter butzleri (strain RM4018) (Arcobacter butzleri).